Consider the following 297-residue polypeptide: Protein LRATD1 (297 aa).

Phosphoserine is present on serine 38. In terms of domain architecture, LRAT spans 138-233 (PAPEPPAPAP…CRFGKREFKA (96 aa)).

Belongs to the LRATD family.

Its subcellular location is the cytoplasm. Functionally, may play a role in cell morphology and motility. In Bos taurus (Bovine), this protein is Protein LRATD1 (LRATD1).